A 277-amino-acid chain; its full sequence is Thymidylate synthase (277 aa).

Arginine 21 serves as a coordination point for dUMP. Histidine 51 lines the (6R)-5,10-methylene-5,6,7,8-tetrahydrofolate pocket. Arginine 126 to arginine 127 contributes to the dUMP binding site. Catalysis depends on cysteine 159, which acts as the Nucleophile. Residues arginine 179–aspartate 182, asparagine 190, and histidine 220–tyrosine 222 contribute to the dUMP site. Aspartate 182 provides a ligand contact to (6R)-5,10-methylene-5,6,7,8-tetrahydrofolate. A (6R)-5,10-methylene-5,6,7,8-tetrahydrofolate-binding site is contributed by serine 276.

The protein belongs to the thymidylate synthase family. Bacterial-type ThyA subfamily. In terms of assembly, homodimer.

It localises to the cytoplasm. It carries out the reaction dUMP + (6R)-5,10-methylene-5,6,7,8-tetrahydrofolate = 7,8-dihydrofolate + dTMP. It participates in pyrimidine metabolism; dTTP biosynthesis. Functionally, catalyzes the reductive methylation of 2'-deoxyuridine-5'-monophosphate (dUMP) to 2'-deoxythymidine-5'-monophosphate (dTMP) while utilizing 5,10-methylenetetrahydrofolate (mTHF) as the methyl donor and reductant in the reaction, yielding dihydrofolate (DHF) as a by-product. This enzymatic reaction provides an intracellular de novo source of dTMP, an essential precursor for DNA biosynthesis. The polypeptide is Thymidylate synthase (Hydrogenovibrio crunogenus (strain DSM 25203 / XCL-2) (Thiomicrospira crunogena)).